The primary structure comprises 252 residues: Auxin-induced in root cultures protein 12 (252 aa).

The N-terminal stretch at 1-25 (MASSSSSLLILAVACFVSLISPAIS) is a signal peptide. The 117-residue stretch at 49–165 (LNSYLHYTYN…DSVNQVWQIG (117 aa)) folds into the DOMON domain. N58 and N61 each carry an N-linked (GlcNAc...) asparagine glycan. Heme is bound at residue M91. Residues N114 and N167 are each glycosylated (N-linked (GlcNAc...) asparagine). Heme is bound at residue H176. The tract at residues 193–224 (EDAAPGSAPSPGSAPAPGTSGSTTPGTAAGGP) is disordered. Over residues 195–219 (AAPGSAPSPGSAPAPGTSGSTTPGT) the composition is skewed to low complexity. A lipid anchor (GPI-anchor amidated asparagine) is attached at N226. A propeptide spans 227–252 (AGSLTRNVNFGVNLGILVLLGSIFIF) (removed in mature form).

Heme is required as a cofactor.

The protein resides in the cell membrane. Functionally, one-heme-containing cytochrome. The chain is Auxin-induced in root cultures protein 12 (AIR12) from Arabidopsis thaliana (Mouse-ear cress).